Consider the following 565-residue polypeptide: Inositol-3-phosphate synthase (565 aa).

Positions 70, 71, 72, 73, 144, 180, 181, 191, 194, 231, 232, 233, 234, 282, 283, 307, 310, 341, 342, 343, 356, 394, 395, 423, and 424 each coordinate NAD(+). A Phosphoserine modification is found at S536. Residues 546-565 form a disordered region; it reads LHANGHSNGSAKLATNGNGH. Polar residues predominate over residues 550–565; sequence GHSNGSAKLATNGNGH.

The protein belongs to the myo-inositol 1-phosphate synthase family. It depends on NAD(+) as a cofactor. As to expression, higher expression in adult heads than bodies.

It is found in the cytoplasm. The catalysed reaction is D-glucose 6-phosphate = 1D-myo-inositol 3-phosphate. It participates in polyol metabolism; myo-inositol biosynthesis; myo-inositol from D-glucose 6-phosphate: step 1/2. In terms of biological role, key enzyme in myo-inositol biosynthesis pathway that catalyzes the conversion of glucose 6-phosphate to 1-myo-inositol 1-phosphate in a NAD-dependent manner. Rate-limiting enzyme in the synthesis of all inositol-containing compounds. The sequence is that of Inositol-3-phosphate synthase (Inos) from Drosophila melanogaster (Fruit fly).